The following is a 689-amino-acid chain: MSKHTVLFELGCEELPPKSLKTLRDALQAETVKGLKDAGLAFASIEAYAAPRRLALKIVDVDGAQADTQKRFDGPAVQAAYDAEGKPTKALEGFMRGQGITADQVSTFQAGKVEKVCYLKDVKGQTLDALLPQILQTALDNLPIAKRMRSAASRTEFVRPVKWVVLLKDDQIIEATIQDHQAGNVTYGHRFHAPEAVTLAHANDYLAALEKAYVVANFEKRQATIQEQVKKLADEVNATAIVPADLLDEVTSLVEWPVALRANFEERFLAVPQEALITTMQDNQKYFCLINSEGKLQPYFITVSNIESKDPTQIIEGNEKVVRPRLSDAEFFFLQDQKQPLASRKEKLANMVFQAQLGTLWDKSTRIAKLAVALSPITGANPADAEKAALLAKCDLTSELVGEFPELQGIAGTYYARIEGENTEVSEALGEQYLPKFAGDVLPKTKTGTTIALADRLDTLVGIFGIGQAPTGSKDPFALRRSAIGILRLIIENELDVTIEELVNLALQGYGDIVKDHDKTLADAVAFLEGRYRAKYEDQGVAVDVLQAVQALAPKSPLDFDKRVNAVNHFRALPEAAALAAANKRVANILAKEAAPEGSVVEANLVEDAEKALFAELQAVTPAVEPLLAAKDYTAALSKLAALRAPIDAFFDGVMVMADDADLKANRLRLLAQLRHLFTVVADVSVLQG.

It belongs to the class-II aminoacyl-tRNA synthetase family. As to quaternary structure, tetramer of two alpha and two beta subunits.

The protein resides in the cytoplasm. It carries out the reaction tRNA(Gly) + glycine + ATP = glycyl-tRNA(Gly) + AMP + diphosphate. This is Glycine--tRNA ligase beta subunit from Acinetobacter baylyi (strain ATCC 33305 / BD413 / ADP1).